The chain runs to 282 residues: MVHQLKLLKDDFFASDQQAVAVADCYPQDVFAEHTHDFCELVIVWRGNGLHVLNDRPYRITRGDLFYIHADDKHSYASVNDLVLQNIIYCPERLKLNLDWQGAIPGFSVSAGQPHWRLGSMGMAQARQIIGQLEHESSQHVPFANEMAELLFGQLVMLLNRHRYTSDSLPPTSSETLLDKLITRLAASLKSPFALDKFCDEASCSERVLRQQFRQQTGMTINQYLRQVRVCHAQYLLQHSRLLISDISTECGFEDSNYFSVVFTRETGMTPSQWRHLNSQKD.

Residues 179–277 enclose the HTH araC/xylS-type domain; it reads DKLITRLAAS…GMTPSQWRHL (99 aa). 2 consecutive DNA-binding regions (H-T-H motif) follow at residues 196–217 and 244–267; these read DKFCDEASCSERVLRQQFRQQT and ISDISTECGFEDSNYFSVVFTRET.

Binds DNA as a dimer.

Its subcellular location is the cytoplasm. In terms of biological role, activates expression of the rhaSR operon in response to L-rhamnose. This Shigella dysenteriae serotype 1 (strain Sd197) protein is HTH-type transcriptional activator RhaR.